The following is a 408-amino-acid chain: Phosphopentomutase (408 aa).

Mn(2+) is bound by residues Asp-10, Asp-307, His-312, Asp-348, His-349, and His-360.

It belongs to the phosphopentomutase family. It depends on Mn(2+) as a cofactor.

It localises to the cytoplasm. The enzyme catalyses 2-deoxy-alpha-D-ribose 1-phosphate = 2-deoxy-D-ribose 5-phosphate. The catalysed reaction is alpha-D-ribose 1-phosphate = D-ribose 5-phosphate. The protein operates within carbohydrate degradation; 2-deoxy-D-ribose 1-phosphate degradation; D-glyceraldehyde 3-phosphate and acetaldehyde from 2-deoxy-alpha-D-ribose 1-phosphate: step 1/2. In terms of biological role, isomerase that catalyzes the conversion of deoxy-ribose 1-phosphate (dRib-1-P) and ribose 1-phosphate (Rib-1-P) to deoxy-ribose 5-phosphate (dRib-5-P) and ribose 5-phosphate (Rib-5-P), respectively. This Proteus mirabilis (strain HI4320) protein is Phosphopentomutase.